The sequence spans 187 residues: Small ribosomal subunit protein uS5 (187 aa).

Positions 1–20 are disordered; it reads MAERENRRDRRDDRSREETP. Residues 22-85 enclose the S5 DRBM domain; it reads FADRLVAINR…EQAKRQMIRV (64 aa). The tract at residues 154–174 is disordered; the sequence is DGLKRESSPRQVAQRRGKKVA.

Belongs to the universal ribosomal protein uS5 family. As to quaternary structure, part of the 30S ribosomal subunit. Contacts proteins S4 and S8.

In terms of biological role, with S4 and S12 plays an important role in translational accuracy. Its function is as follows. Located at the back of the 30S subunit body where it stabilizes the conformation of the head with respect to the body. The polypeptide is Small ribosomal subunit protein uS5 (Cereibacter sphaeroides (strain ATCC 17025 / ATH 2.4.3) (Rhodobacter sphaeroides)).